The following is a 260-amino-acid chain: 3-alpha-(or 20-beta)-hydroxysteroid dehydrogenase (260 aa).

Residues arginine 17, methionine 19, aspartate 38, aspartate 61, valine 62, asparagine 88, tyrosine 153, lysine 157, valine 186, threonine 188, and threonine 191 each coordinate NAD(+). Tyrosine 153 serves as the catalytic Proton acceptor.

The protein belongs to the short-chain dehydrogenases/reductases (SDR) family. As to quaternary structure, homotetramer.

The catalysed reaction is androstan-3alpha,17beta-diol + NAD(+) = 17beta-hydroxyandrostanone + NADH + H(+). The protein operates within lipid metabolism; steroid degradation. In terms of biological role, probably involved in steroid metabolism. The sequence is that of 3-alpha-(or 20-beta)-hydroxysteroid dehydrogenase (fabG3) from Mycobacterium bovis (strain ATCC BAA-935 / AF2122/97).